Here is a 474-residue protein sequence, read N- to C-terminus: Vitamin D-binding protein (474 aa).

The N-terminal stretch at 1–16 (MKRVLVLLLAVAFGHA) is a signal peptide. Albumin domains are found at residues 17-208 (LERG…QLKH), 209-394 (LSLL…LLKK), and 395-474 (ELSS…KNIL). 14 disulfides stabilise this stretch: cysteine 29–cysteine 75, cysteine 74–cysteine 83, cysteine 96–cysteine 112, cysteine 111–cysteine 122, cysteine 145–cysteine 190, cysteine 189–cysteine 198, cysteine 220–cysteine 266, cysteine 265–cysteine 273, cysteine 286–cysteine 300, cysteine 299–cysteine 311, cysteine 335–cysteine 376, cysteine 375–cysteine 384, cysteine 407–cysteine 453, and cysteine 452–cysteine 462.

The protein belongs to the ALB/AFP/VDB family. In terms of assembly, associates with membrane-bound immunoglobulin on the surface of B-lymphocytes and with IgG Fc receptor on the membranes of T-lymphocytes. Interacts with LRP2; the interaction is required for renal uptake of GC in complex with 25-hydroxyvitamin D3. Allele GC*1S is O-glycosylated at Thr-436. The trisaccharide sugar moiety can be modified by the successive removal of neuraminic acid and galactose leaving an O-mceeN-acetyl-galactosamine. This conversion is thought to produce a macrophage-activating factor (Gc-MAF). Only a minor proportion of plasma GC is O-glycosylated. The potential N-glycosylation site predicted at Asn-288 is thought to be nonglycosylated. Expressed in the liver. Found in plasma, ascites, cerebrospinal fluid and urine.

It localises to the secreted. Involved in vitamin D transport and storage, scavenging of extracellular G-actin, enhancement of the chemotactic activity of C5 alpha for neutrophils in inflammation and macrophage activation. This is Vitamin D-binding protein (GC) from Homo sapiens (Human).